Consider the following 394-residue polypeptide: Elongation factor Tu 1 (394 aa).

The tr-type G domain maps to 10–204 (KPHVNVGTIG…ALDSYIPEPE (195 aa)). The tract at residues 19–26 (GHVDHGKT) is G1. 19 to 26 (GHVDHGKT) contacts GTP. Thr-26 contributes to the Mg(2+) binding site. Residues 60–64 (GITIN) form a G2 region. The G3 stretch occupies residues 81 to 84 (DCPG). GTP contacts are provided by residues 81–85 (DCPGH) and 136–139 (NKCD). A G4 region spans residues 136–139 (NKCD). The segment at 174–176 (SAL) is G5.

This sequence belongs to the TRAFAC class translation factor GTPase superfamily. Classic translation factor GTPase family. EF-Tu/EF-1A subfamily. Monomer.

Its subcellular location is the cytoplasm. The enzyme catalyses GTP + H2O = GDP + phosphate + H(+). GTP hydrolase that promotes the GTP-dependent binding of aminoacyl-tRNA to the A-site of ribosomes during protein biosynthesis. The chain is Elongation factor Tu 1 from Shewanella sp. (strain MR-4).